Reading from the N-terminus, the 60-residue chain is Transcriptional regulatory protein SenN (60 aa).

Residues 11-31 (RFRKRKTFGNQILPLELLIEK) constitute a DNA-binding region (H-T-H motif).

The protein to B.subtilis SenS.

Functionally, regulates the expression of extracellular-protein genes of Bacillus natto. The sequence is that of Transcriptional regulatory protein SenN (senN) from Bacillus subtilis subsp. natto.